Here is a 117-residue protein sequence, read N- to C-terminus: UPF0102 protein YE3728 (117 aa).

This sequence belongs to the UPF0102 family.

This Yersinia enterocolitica serotype O:8 / biotype 1B (strain NCTC 13174 / 8081) protein is UPF0102 protein YE3728.